We begin with the raw amino-acid sequence, 157 residues long: Small ribosomal subunit protein uS7 (157 aa).

Belongs to the universal ribosomal protein uS7 family. In terms of assembly, part of the 30S ribosomal subunit. Contacts proteins S9 and S11.

Its function is as follows. One of the primary rRNA binding proteins, it binds directly to 16S rRNA where it nucleates assembly of the head domain of the 30S subunit. Is located at the subunit interface close to the decoding center, probably blocks exit of the E-site tRNA. The polypeptide is Small ribosomal subunit protein uS7 (Psychrobacter cryohalolentis (strain ATCC BAA-1226 / DSM 17306 / VKM B-2378 / K5)).